The following is a 384-amino-acid chain: DNA replication and repair protein RecF (384 aa).

43–50 (GENGSGKT) is an ATP binding site.

Belongs to the RecF family.

The protein resides in the cytoplasm. Functionally, the RecF protein is involved in DNA metabolism; it is required for DNA replication and normal SOS inducibility. RecF binds preferentially to single-stranded, linear DNA. It also seems to bind ATP. The protein is DNA replication and repair protein RecF of Brucella suis biovar 1 (strain 1330).